Here is a 251-residue protein sequence, read N- to C-terminus: Triosephosphate isomerase (251 aa).

A substrate-binding site is contributed by 9 to 11 (NWK). His-95 acts as the Electrophile in catalysis. The Proton acceptor role is filled by Glu-167. Substrate is bound by residues Gly-173, Ser-212, and 233–234 (GG).

Belongs to the triosephosphate isomerase family. In terms of assembly, homodimer.

The protein localises to the cytoplasm. The catalysed reaction is D-glyceraldehyde 3-phosphate = dihydroxyacetone phosphate. It functions in the pathway carbohydrate biosynthesis; gluconeogenesis. It participates in carbohydrate degradation; glycolysis; D-glyceraldehyde 3-phosphate from glycerone phosphate: step 1/1. Involved in the gluconeogenesis. Catalyzes stereospecifically the conversion of dihydroxyacetone phosphate (DHAP) to D-glyceraldehyde-3-phosphate (G3P). This is Triosephosphate isomerase from Pseudomonas fluorescens (strain Pf0-1).